Here is a 234-residue protein sequence, read N- to C-terminus: Ubiquitin domain-containing protein 2 (234 aa).

Residues 1 to 46 (MGGCVGAQHDSSGSLNENSDGTGVALGRNQPLKKEKPKWKSDYPMT) are disordered. Residues 9-21 (HDSSGSLNENSDG) are compositionally biased toward polar residues. Over residues 32-41 (LKKEKPKWKS) the composition is skewed to basic and acidic residues. The Ubiquitin-like domain occupies 152–227 (SQLRLRLSTG…VQVIVSQPVQ (76 aa)).

The protein resides in the cytoplasm. The polypeptide is Ubiquitin domain-containing protein 2 (Ubtd2) (Mus musculus (Mouse)).